Reading from the N-terminus, the 204-residue chain is NAD(P)H dehydrogenase (quinone) (204 aa).

The Flavodoxin-like domain maps to 3–194 (VLIVFYSMYG…AGARYQGRHV (192 aa)). FMN contacts are provided by residues 9–14 (SMYGHI) and 82–84 (TRF). An NAD(+)-binding site is contributed by Tyr-11. Trp-102 is a substrate binding site. FMN is bound at residue His-138.

The protein belongs to the WrbA family. FMN serves as cofactor.

It carries out the reaction a quinone + NADH + H(+) = a quinol + NAD(+). The catalysed reaction is a quinone + NADPH + H(+) = a quinol + NADP(+). This Syntrophobacter fumaroxidans (strain DSM 10017 / MPOB) protein is NAD(P)H dehydrogenase (quinone).